Consider the following 118-residue polypeptide: Cell division protein FtsB (118 aa).

The Cytoplasmic segment spans residues 1 to 6 (MRNWRW). Residues 7–24 (LLLVLAALLAWLQHRFWF) traverse the membrane as a helical segment. Over 25–118 (GPGNSGEVRM…DLSQPRREKR (94 aa)) the chain is Periplasmic. Residues 30–66 (GEVRMLQVQIVQQHQENERLRQRNASLAAEVKNLKDG) adopt a coiled-coil conformation. The segment at 98 to 118 (LPNDTSADHGVDLSQPRREKR) is disordered. Residues 103-118 (SADHGVDLSQPRREKR) are compositionally biased toward basic and acidic residues.

This sequence belongs to the FtsB family. Part of a complex composed of FtsB, FtsL and FtsQ.

The protein resides in the cell inner membrane. In terms of biological role, essential cell division protein. May link together the upstream cell division proteins, which are predominantly cytoplasmic, with the downstream cell division proteins, which are predominantly periplasmic. The protein is Cell division protein FtsB of Xylella fastidiosa (strain M12).